The following is a 500-amino-acid chain: ADP,ATP carrier protein 5 (500 aa).

11 helical membrane-spanning segments follow: residues 26–46 (LGKF…QNIL), 62–82 (IAGF…VIIY), 94–114 (IFYY…FVIY), 149–169 (YIVY…LLFW), 184–204 (FYTL…FLMM), 224–244 (ITLV…CCLL), 287–307 (LWLL…VEAV), 328–348 (LYIL…NNVM), 357–377 (AVIS…LIVF), 381–401 (ILSL…VSIG), and 469–489 (SISP…IYAV).

The protein belongs to the ADP/ATP translocase tlc family.

The protein localises to the cell membrane. In terms of biological role, provides the rickettsial cell with host ATP in exchange for rickettsial ADP. This is an obligate exchange system. This energy acquiring activity is an important component of rickettsial parasitism. The sequence is that of ADP,ATP carrier protein 5 (tlcE) from Rickettsia prowazekii (strain Madrid E).